The chain runs to 367 residues: Histidinol-phosphate aminotransferase (367 aa).

Lysine 226 is modified (N6-(pyridoxal phosphate)lysine).

This sequence belongs to the class-II pyridoxal-phosphate-dependent aminotransferase family. Histidinol-phosphate aminotransferase subfamily. Homodimer. Pyridoxal 5'-phosphate is required as a cofactor.

It carries out the reaction L-histidinol phosphate + 2-oxoglutarate = 3-(imidazol-4-yl)-2-oxopropyl phosphate + L-glutamate. The protein operates within amino-acid biosynthesis; L-histidine biosynthesis; L-histidine from 5-phospho-alpha-D-ribose 1-diphosphate: step 7/9. The chain is Histidinol-phosphate aminotransferase from Wolinella succinogenes (strain ATCC 29543 / DSM 1740 / CCUG 13145 / JCM 31913 / LMG 7466 / NCTC 11488 / FDC 602W) (Vibrio succinogenes).